The sequence spans 105 residues: Small ribosomal subunit protein uS10 (105 aa).

This sequence belongs to the universal ribosomal protein uS10 family. In terms of assembly, part of the 30S ribosomal subunit.

Involved in the binding of tRNA to the ribosomes. This chain is Small ribosomal subunit protein uS10, found in Picosynechococcus sp. (strain ATCC 27264 / PCC 7002 / PR-6) (Agmenellum quadruplicatum).